Here is a 1422-residue protein sequence, read N- to C-terminus: MATTIQNNFRIRRNFGKINKIAEIPNLIAIQKFSYDKFLQADVPPEKRDDTGLQGVFKSVFPIKDFNETSSLEFVSYHLEKPKYDVDECHQRGMTYSAPIKVVVRLVVWDKDEETGAQSIRDVKEQEVYFGEIPLMTENGTFIINGTERVVVSQLHRSPGAFFDHDKGKSHSSGKLLYNARIIPYRGSWIDFEFDHKDILYVRIDRRRKLPATVLLRALGATPDTAKKDPVEFHGSAEEILKYYYDTETIRIEGKGKYEKDLVPDLLKGQRATRDIRDPKSNEVIVKKNRKYTESAIKKLVAAKMKSLPVEPEEVYTKISAEDVVDETTGEVLLEVNEEVTEAKVEELRKRNINEFKVLFIDNLNILPALRDTLMQDKISTPEEAIMEIYRRLRPGDPPTPETATNLFVNLFFNAERYDLSKVGRLKLNYKFGIEEPLENTVLTKRDILEVVRFLIDLKNGKPNKDVDDIDHLGNRRVRAVGELLENQYRIGLVRMERAIKERMSLQEIETLMPHDLINAKPVTAVIKEFFGSSQLSQFMDQTNPLSEVTHKRRLSALGPGGLTRERAGFEVRDVHSTHYGRICPIETPEGPNIGLIASLSTYARVNEYGFVETPYRKVEKGRVTDEVTFYSALEEEKHIIAQANAPVDKKGNFTEAKVWCRKEGEYIYVRPDEVDLMDVSPNQLVSVAASLVPFLENDDANRALMGSNMQRQAVPLLRTQAPLVGTGIEAIVARDSGVTTVAKRDGVVQSVDASRIVVKADVPTSATDVANEVDIYNLIKYQRSNQNTCINQKPIVKPGERVKKGDVIADGPATEMGELALGQNVVVAFMPWQGYNFEDSILLSERLIKEDVFTSVHIEEFECVARDTKLGKEEITRDIPNVGEEALKDLDESGIIRIGAEVKPGDILVGKITPKGETQLSPEEKLLRAIFGEKAGDVRDSSLRVPPGVSGTVINAKVFSRKGVEKDERAKAIEEMEEAKLLKDQNDEIKIIQDSAFQKIRRLLLGKEVTARLVDDKGEQLLKKGDVLDDALLDTVPQRYWGEIAVAGDVQDLARKIIENFEEQKELVKLLFGEKIGRLKKGDELPPGVIKMVKVYVAIKRKLAVGDKMAGRHGNKGVVSRVLPEEDLPYLEDGTPVDIVLNPLGVPSRMNVGQILETHLGWAARNVGLRLQEMIEKEWGADPLRKKLKAAFAGTEGGPVGERLAALIEDVPEKELPKLVQKLRRGMHVATPVFDGAREDEMKALMEEGSATLQSILFDGRTGEPFDQDVTVGVMYMLKLHHLVDEKIHARSIGPYSLVTQQPLGGKAQFGGQRLGEMEVWAMEAYGAAYSLQEFLTVKSDDVVGRTRMYEAIVKGENTLESGLPESFNVLIKELQSLALDVELLETPEAQAAREAAERDLGGGPLGAPRGAVASGEKSSA.

The segment at 1392–1422 (QAAREAAERDLGGGPLGAPRGAVASGEKSSA) is disordered.

Belongs to the RNA polymerase beta chain family. As to quaternary structure, the RNAP catalytic core consists of 2 alpha, 1 beta, 1 beta' and 1 omega subunit. When a sigma factor is associated with the core the holoenzyme is formed, which can initiate transcription.

It carries out the reaction RNA(n) + a ribonucleoside 5'-triphosphate = RNA(n+1) + diphosphate. DNA-dependent RNA polymerase catalyzes the transcription of DNA into RNA using the four ribonucleoside triphosphates as substrates. The chain is DNA-directed RNA polymerase subunit beta from Anaeromyxobacter dehalogenans (strain 2CP-1 / ATCC BAA-258).